The sequence spans 376 residues: Small ribosomal subunit protein uS11m (376 aa).

The protein belongs to the universal ribosomal protein uS11 family. In terms of assembly, component of the mitochondrial small ribosomal subunit (mt-SSU). Mature N.crassa 74S mitochondrial ribosomes consist of a small (37S) and a large (54S) subunit. The 37S small subunit contains a 16S ribosomal RNA (16S mt-rRNA) and 32 different proteins. The 54S large subunit contains a 23S rRNA (23S mt-rRNA) and 42 different proteins.

It is found in the mitochondrion. Its function is as follows. Component of the mitochondrial ribosome (mitoribosome), a dedicated translation machinery responsible for the synthesis of mitochondrial genome-encoded proteins, including at least some of the essential transmembrane subunits of the mitochondrial respiratory chain. The mitoribosomes are attached to the mitochondrial inner membrane and translation products are cotranslationally integrated into the membrane. In Neurospora crassa (strain ATCC 24698 / 74-OR23-1A / CBS 708.71 / DSM 1257 / FGSC 987), this protein is Small ribosomal subunit protein uS11m (mrps18).